Consider the following 744-residue polypeptide: Glucosamine inositolphosphorylceramide transferase 1 (744 aa).

3 consecutive transmembrane segments (helical) span residues 31-51, 378-398, and 460-480; these read FLVA…WLVV, SLFG…VGFV, and LFFC…VHFL. Substrate contacts are provided by residues N534, 558–563, 579–581, R609, and 665–669; these read NSLNNR, DDD, and FNCED. A Mn(2+)-binding site is contributed by D581. The cysteines at positions 667 and 718 are disulfide-linked. The active site involves D669.

The protein belongs to the glycosyltransferase 64 family. Requires Mn(2+) as cofactor. As to expression, highly expressed in almost all tissues.

Its subcellular location is the membrane. It functions in the pathway sphingolipid metabolism. Its function is as follows. Essential protein. Glycosyltransferase that mediates the glycosylation of glycosylinositol phosphorylceramides (GIPCs), the major sphingolipids in the plasma membrane; acts as a HexN(Ac)-specific GIPC sugar transferase. Responsible for the glycosylation of a subgroup of GIPCs found in seeds and pollen that contain GlcNAc and GlcN (GlcN(Ac)). Maybe involved in the maintenance of cell-cell adhesion. The chain is Glucosamine inositolphosphorylceramide transferase 1 from Oryza sativa subsp. japonica (Rice).